The primary structure comprises 720 residues: MVDKLIHPWDLDLLVSGRQKDPHKLLGILASEDSSDHIVIFRPGAHTVAIELLGELHHAVAYRSGLFFLSVPKGIGHGDYRVYHQNGLLAHDPYAFPPLWGEIDSFLFHRGTHYRIYERMGAIPMEVQGISGVLFVLWAPHAQRVSVVGDFNFWHGLVNPLRKISDQGIWELFVPGLGEGIRYKWEIVTQSGNVIVKTDPYGKSFDPPPQGTARVADSESYSWSDHRWMERRSKQSEGPVTIYEVHLGSWQWQEGRPLSYSEMAHRLASYCKEMHYTHVELLPITEHPLNESWGYQVTGYYAPTSRYGTLQEFQYFVDYLHKENIGIILDWVPGHFPVDAFALASFDGEPLYEYTGHSQALHPHWNTFTFDYSRHEVTNFLLGSALFWLDKMHIDGLRVDAVASMLYRDYGREDGEWTPNIYGGKENLESIEFLKHLNSVIHKEFSGVLTFAEESTAFPGVTKDVDQGGLGFDYKWNLGWMHDTFHYFMKDPMYRKYHQKDLTFSLWYAFQESFILPLSHDEVVHGKGSLVNKLPGDTWTRFAQMRVLLSYQICLPGKKLLFMGGEFGQYGEWSPDRPLDWELLNHHYHKTLRNCVSALNALYIHQPYLWMQESSQECFHWVDFHDIENNVIAYYRFAGSNRSSALLCVHHFSASTFPSYVLRCEGVKHCELLLNTDDESFGGSGKGNRAPVVCQDQGVAWGLDIELPPLATVIYLVTFF.

Asp-400 (nucleophile) is an active-site residue. Glu-453 (proton donor) is an active-site residue.

This sequence belongs to the glycosyl hydrolase 13 family. GlgB subfamily. In terms of assembly, monomer.

The catalysed reaction is Transfers a segment of a (1-&gt;4)-alpha-D-glucan chain to a primary hydroxy group in a similar glucan chain.. Its pathway is glycan biosynthesis; glycogen biosynthesis. Catalyzes the formation of the alpha-1,6-glucosidic linkages in glycogen by scission of a 1,4-alpha-linked oligosaccharide from growing alpha-1,4-glucan chains and the subsequent attachment of the oligosaccharide to the alpha-1,6 position. This chain is 1,4-alpha-glucan branching enzyme GlgB, found in Chlamydia pneumoniae (Chlamydophila pneumoniae).